Here is a 299-residue protein sequence, read N- to C-terminus: MDLNNKIFNILLPIVTVSFLLVFMPFSIFFKLLQFIRGCKESEKVNGKVVIITGSSSGIGEHLAYEYARRGAYLTLVARREDRLQVVADRCRKLGSPDVAVVRGDVSVIKDCKRFVQETISRFGRLDHLVNNAGIAEAKFFEDYSEISDVLPIVNTNFWGPVYATHFAIPHLKKTKGKIIAVASPAGWSGVPRMSIYAASKAAMINFYETLRIELHPEVGVTIVFPGLIENGNTNPDLLAEKQDWSQVVTIESAAECAKAVVNGICRGKTFVAEPSWVRVLFWLSAICPELLISKPKRN.

A helical; Signal-anchor for type II membrane protein transmembrane segment spans residues 10–30 (ILLPIVTVSFLLVFMPFSIFF). NADP(+) is bound by residues 54–80 (GSSSGIGEHLAYEYARRGAYLTLVARR) and D105. S184 is a substrate binding site. Catalysis depends on Y197, which acts as the Proton acceptor. Residues 197–201 (YAASK) and K201 each bind NADP(+).

The protein belongs to the short-chain dehydrogenases/reductases (SDR) family.

The protein resides in the membrane. This Arabidopsis thaliana (Mouse-ear cress) protein is 11-beta-hydroxysteroid dehydrogenase-like 4A (HSD4).